The following is a 700-amino-acid chain: Ribonucleoside-diphosphate reductase subunit alpha (700 aa).

Substrate-binding positions include Thr153, 169–170 (SC), Gly198, 380–384 (NLCSE), and 580–584 (PTGSI). The cysteines at positions 170 and 409 are disulfide-linked. The active-site Proton acceptor is Asn380. Catalysis depends on Cys382, which acts as the Cysteine radical intermediate. The active-site Proton acceptor is Glu384.

The protein belongs to the ribonucleoside diphosphate reductase large chain family. In terms of assembly, tetramer of two alpha and two beta subunits.

It catalyses the reaction a 2'-deoxyribonucleoside 5'-diphosphate + [thioredoxin]-disulfide + H2O = a ribonucleoside 5'-diphosphate + [thioredoxin]-dithiol. Under complex allosteric control mediated by deoxynucleoside triphosphates and ATP binding. The type of nucleotide bound at the specificity site determines substrate preference. It seems probable that ATP makes the enzyme reduce CDP and UDP, dGTP favors ADP reduction and dTTP favors GDP reduction. Its function is as follows. Provides the precursors necessary for DNA synthesis. Catalyzes the biosynthesis of deoxyribonucleotides from the corresponding ribonucleotides. The protein is Ribonucleoside-diphosphate reductase subunit alpha of Bacillus subtilis (strain 168).